The sequence spans 156 residues: MSINATLFVQAIVFLILVLFTMKFVWPPITKALDERAQKIADGLAAADRAKTELAAADQRVKQELAAASNEIATRLADAERRAQAIIEEAKARANDEGNKIVAAARAEAEQQAIQAREALREQVAALAVKGAEQILRKEVNAGVHADLLNRLKTEL.

The helical transmembrane segment at 7-27 (LFVQAIVFLILVLFTMKFVWP) threads the bilayer.

It belongs to the ATPase B chain family. F-type ATPases have 2 components, F(1) - the catalytic core - and F(0) - the membrane proton channel. F(1) has five subunits: alpha(3), beta(3), gamma(1), delta(1), epsilon(1). F(0) has three main subunits: a(1), b(2) and c(10-14). The alpha and beta chains form an alternating ring which encloses part of the gamma chain. F(1) is attached to F(0) by a central stalk formed by the gamma and epsilon chains, while a peripheral stalk is formed by the delta and b chains.

It localises to the cell inner membrane. Its function is as follows. F(1)F(0) ATP synthase produces ATP from ADP in the presence of a proton or sodium gradient. F-type ATPases consist of two structural domains, F(1) containing the extramembraneous catalytic core and F(0) containing the membrane proton channel, linked together by a central stalk and a peripheral stalk. During catalysis, ATP synthesis in the catalytic domain of F(1) is coupled via a rotary mechanism of the central stalk subunits to proton translocation. Component of the F(0) channel, it forms part of the peripheral stalk, linking F(1) to F(0). The sequence is that of ATP synthase subunit b from Acidovorax sp. (strain JS42).